We begin with the raw amino-acid sequence, 681 residues long: PTS system glucose-specific EIICBA component (681 aa).

Positions 3–414 (KKLFGQLQRI…LKYKTPGRED (412 aa)) constitute a PTS EIIC type-1 domain. A run of 10 helical transmembrane segments spans residues 16-36 (LMLP…GTAM), 73-93 (MIFA…AAIA), 126-146 (ILGI…GALA), 170-190 (FVPI…ALIW), 199-219 (AFST…FGFI), 273-293 (FMQG…LAIY), 303-323 (VVAG…ITEP), 328-348 (FLFV…LSFL), 355-375 (LHLG…GILP), and 383-403 (VIPV…FLIV). A PTS EIIB type-1 domain is found at 425–506 (TELPYAVLEA…QQIMNGQVVE (82 aa)). The Phosphocysteine intermediate; for EIIB activity role is filled by Cys-447. Residues 551–655 (DQVFSEKMMG…SDITPIIVTQ (105 aa)) form the PTS EIIA type-1 domain. The active-site Tele-phosphohistidine intermediate; for EIIA activity is His-603.

The protein localises to the cell membrane. The catalysed reaction is N(pros)-phospho-L-histidyl-[protein] + D-glucose(out) = D-glucose 6-phosphate(in) + L-histidyl-[protein]. Functionally, the phosphoenolpyruvate-dependent sugar phosphotransferase system (sugar PTS), a major carbohydrate active transport system, catalyzes the phosphorylation of incoming sugar substrates concomitantly with their translocation across the cell membrane. This system is involved in glucose transport. This is PTS system glucose-specific EIICBA component (ptsG) from Staphylococcus aureus (strain bovine RF122 / ET3-1).